The chain runs to 1826 residues: ATPase family AAA domain-containing protein 5 (1826 aa).

Position 44 is a phosphoserine (Ser44). Lys127 is covalently cross-linked (Glycyl lysine isopeptide (Lys-Gly) (interchain with G-Cter in SUMO2)). Disordered regions lie at residues Ser170–Asp254, Pro282–Ser311, Ala323–Asn367, Gln398–Ser572, Arg588–Ser623, Lys647–Asn684, and Val709–Glu729. Residue Ser215 is modified to Phosphoserine. Residues Asn243 to Asp254 show a composition bias toward basic and acidic residues. A compositionally biased stretch (low complexity) spans Ser298–Ser311. Phosphoserine is present on residues Ser351 and Ser366. The interval Lys365–Glu381 is interaction with WDR48. Positions Lys418–Ile442 are enriched in basic and acidic residues. Over residues Pro445–Leu456 the composition is skewed to polar residues. The span at His459 to Glu468 shows a compositional bias: basic and acidic residues. The segment covering Lys469 to Arg481 has biased composition (basic residues). Basic and acidic residues predominate over residues Asn487–Gln505. Over residues Asp540–Thr559 the composition is skewed to polar residues. Phosphoserine is present on residues Ser591 and Ser603. Phosphoserine is present on residues Ser727 and Ser801. Positions Gly965 to Thr1034 are disordered. Over residues Glu1006–Ile1019 the composition is skewed to basic and acidic residues. Ser1104 bears the Phosphoserine mark. Gly1119–Thr1126 contacts ATP. Residues Tyr1183–Lys1216 form a disordered region. An LXCXE motif motif is present at residues Leu1415 to Glu1419. 2 disordered regions span residues Pro1527–Lys1552 and Ser1592–Pro1611. The tract at residues Pro1612–Glu1701 is interaction with RAD51 and RFC5.

The protein belongs to the AAA ATPase family. In terms of assembly, component of a heteropentameric replication factor ATAD5 RFC-like complex composed of one large subunit (ATAD5) and four small subunits (RFC2, RFC3, RFC4 and RFC5). Within the ATAD5 RFC-like complex, interacts with RFC2, RFC4 and RFC5. Within the ATAD5 RFC-like complex, interacts directly via-N terminal with RAD51; the interactions is enhanced under replication stress. Interacts with RB1 predominantly in G1 phase via its LXCXE motif. Interacts with RAD9A in growing cells. The interaction with RAD9A is reduced after exposure to DNA replication-inhibiting agents. Interacts with BRD4. Interacts with PCNA. Interacts with deubiquitinating enzyme USP1, and its associated factor, WDR48. ATR may stimulate the RAD9A dissociation. Expressed ubiquitously in all cell lines like teratocarcinoma, cell lymphoma, lymphoma.

It is found in the nucleus. Its function is as follows. Has an important role in DNA replication and in maintaining genome integrity during replication stress. Involved in a RAD9A-related damage checkpoint, a pathway that is important in determining whether DNA damage is compatible with cell survival or whether it requires cell elimination by apoptosis. Modulates the RAD9A interaction with BCL2 and thereby induces DNA damage-induced apoptosis. Promotes PCNA deubiquitination by recruiting the ubiquitin-specific protease 1 (USP1) and WDR48 thereby down-regulating the error-prone damage bypass pathway. As component of the ATAD5 RFC-like complex, regulates the function of the DNA polymerase processivity factor PCNA by unloading the ring-shaped PCNA homotrimer from DNA after replication during the S phase of the cell cycle. This seems to be dependent on its ATPase activity. Plays important roles in restarting stalled replication forks under replication stress, by unloading the PCNA homotrimer from DNA and recruiting RAD51 possibly through an ATR-dependent manner. Ultimately this enables replication fork regression, breakage, and eventual fork restart. Both the PCNA unloading activity and the interaction with WDR48 are required to efficiently recruit RAD51 to stalled replication forks. Promotes the generation of MUS81-mediated single-stranded DNA-associated breaks in response to replication stress, which is an alternative pathway to restart stalled/regressed replication forks. This Mus musculus (Mouse) protein is ATPase family AAA domain-containing protein 5 (Atad5).